The sequence spans 938 residues: Kexin (938 aa).

The signal sequence occupies residues Met-1–Gln-20. Asn-41 and Asn-193 each carry an N-linked (GlcNAc...) asparagine glycan. The region spanning Gln-179 to Val-489 is the Peptidase S8 domain. Residues Asp-213 and His-251 each act as charge relay system in the active site. Disulfide bonds link Cys-267–Cys-414 and Cys-359–Cys-389. The active-site Charge relay system is the Ser-422. 4 N-linked (GlcNAc...) asparagine glycosylation sites follow: Asn-441, Asn-512, Asn-539, and Asn-599. The P/Homo B domain maps to Val-498–Asp-647. Positions Glu-671–Lys-768 are disordered. Residues Ser-677 to Ser-691 show a composition bias toward low complexity. Residues Lys-711–Pro-735 show a composition bias toward polar residues. Residues Ser-740–Asn-762 are compositionally biased toward acidic residues. A helical transmembrane segment spans residues Gly-775–Phe-795. Over His-796–Asp-924 the chain is Cytoplasmic. The segment covering Thr-798–Arg-808 has biased composition (basic residues). Residues Thr-798–Gln-938 are disordered. Acidic residues predominate over residues Asp-820–Phe-831. A compositionally biased stretch (basic and acidic residues) spans Asp-832–Gln-849. The span at Arg-850–Arg-859 shows a compositional bias: low complexity. Positions Gln-860–Asp-874 are enriched in basic and acidic residues. Positions Gln-902–Thr-919 are enriched in polar residues. The segment covering Lys-921–Gln-938 has biased composition (basic and acidic residues).

Belongs to the peptidase S8 family. Furin subfamily. Ca(2+) serves as cofactor. In terms of processing, O-glycosylated.

It localises to the golgi apparatus. It is found in the trans-Golgi network membrane. The catalysed reaction is Cleavage of -Lys-Arg-|-Xaa- and -Arg-Arg-|-Xaa- bonds to process yeast alpha-factor pheromone and killer toxin precursors.. This chain is Kexin (KEX2), found in Candida albicans (strain WO-1) (Yeast).